A 181-amino-acid polypeptide reads, in one-letter code: Isopentenyl-diphosphate Delta-isomerase (181 aa).

Positions 25 and 32 each coordinate Mn(2+). Positions 30–164 (LLHLAFSCWL…PWAFSPWMVL (135 aa)) constitute a Nudix hydrolase domain. Residue Cys67 is part of the active site. His69 is a binding site for Mn(2+). Glu87 contacts Mg(2+). Glu114 and Glu116 together coordinate Mn(2+). Residue Glu116 is part of the active site.

The protein belongs to the IPP isomerase type 1 family. Homodimer. Mg(2+) is required as a cofactor. It depends on Mn(2+) as a cofactor.

It is found in the cytoplasm. It carries out the reaction isopentenyl diphosphate = dimethylallyl diphosphate. It functions in the pathway isoprenoid biosynthesis; dimethylallyl diphosphate biosynthesis; dimethylallyl diphosphate from isopentenyl diphosphate: step 1/1. In terms of biological role, catalyzes the 1,3-allylic rearrangement of the homoallylic substrate isopentenyl (IPP) to its highly electrophilic allylic isomer, dimethylallyl diphosphate (DMAPP). The chain is Isopentenyl-diphosphate Delta-isomerase from Citrobacter koseri (strain ATCC BAA-895 / CDC 4225-83 / SGSC4696).